Reading from the N-terminus, the 257-residue chain is tRNA pseudouridine synthase A (257 aa).

The active-site Nucleophile is Asp-53. Substrate is bound at residue Tyr-111.

It belongs to the tRNA pseudouridine synthase TruA family. As to quaternary structure, homodimer.

The catalysed reaction is uridine(38/39/40) in tRNA = pseudouridine(38/39/40) in tRNA. In terms of biological role, formation of pseudouridine at positions 38, 39 and 40 in the anticodon stem and loop of transfer RNAs. This is tRNA pseudouridine synthase A from Xylella fastidiosa (strain M12).